We begin with the raw amino-acid sequence, 485 residues long: Silicon efflux transporter LSI3 (485 aa).

Helical transmembrane passes span 14–34 (VAFG…LPIG), 37–57 (AGAL…ADDA), 59–79 (ASID…GGYL), 106–126 (VCVV…CVVL), and 180–200 (FLLG…LMLL). The span at 233–242 (ALNNNKKDDG) shows a compositional bias: basic and acidic residues. Positions 233-261 (ALNNNKKDDGDAATPASPEDDDGGDAESM) are disordered. Transmembrane regions (helical) follow at residues 283–303 (LFLK…YMLG), 336–356 (LLVF…TGLP), 377–397 (VLSV…TVLL), 418–438 (WLLL…GSAA), and 461–481 (HVIF…PLIG).

It belongs to the arsenite-antimonite (ArsB) efflux (TC 2.A.45) family.

It is found in the cell membrane. Silicon efflux transporter involved in silicon transport in shoots. In the nodes, involved with LSI2 and NIP2-2/LSI6 in silicon intervascular transfer, which is required for the preferential distribution of silicon, such as hyperaccumulation of silicon in the husk. Silicon is beneficial to plant growth and helps plants to overcome abiotic and biotic stresses by preventing lodging (falling over) and increasing resistance to pests and diseases, as well as other stresses. This is Silicon efflux transporter LSI3 from Oryza sativa subsp. japonica (Rice).